The chain runs to 452 residues: Cytochrome b-c1 complex subunit 2, mitochondrial (452 aa).

The transit peptide at 1-14 directs the protein to the mitochondrion; that stretch reads MKLLSRAGSFSRFY. An N6-acetyllysine mark is found at lysine 65, lysine 198, and lysine 249. Position 367 is a phosphoserine (serine 367).

Belongs to the peptidase M16 family. UQCRC2/QCR2 subfamily. As to quaternary structure, component of the ubiquinol-cytochrome c oxidoreductase (cytochrome b-c1 complex, complex III, CIII), a multisubunit enzyme composed of 11 subunits. The complex is composed of 3 respiratory subunits cytochrome b, cytochrome c1 and Rieske protein UQCRFS1, 2 core protein subunits UQCRC1/QCR1 and UQCRC2/QCR2, and 6 low-molecular weight protein subunits UQCRH/QCR6, UQCRB/QCR7, UQCRQ/QCR8, UQCR10/QCR9, UQCR11/QCR10 and subunit 9, the cleavage product of Rieske protein UQCRFS1. The complex exists as an obligatory dimer and forms supercomplexes (SCs) in the inner mitochondrial membrane with NADH-ubiquinone oxidoreductase (complex I, CI) and cytochrome c oxidase (complex IV, CIV), resulting in different assemblies (supercomplex SCI(1)III(2)IV(1) and megacomplex MCI(2)III(2)IV(2)). Interacts with RAB5IF. Interacts with STMP1. In terms of tissue distribution, expressed in the head region and flagellum of epididymal sperm.

Its subcellular location is the mitochondrion inner membrane. Its function is as follows. Component of the ubiquinol-cytochrome c oxidoreductase, a multisubunit transmembrane complex that is part of the mitochondrial electron transport chain which drives oxidative phosphorylation. The respiratory chain contains 3 multisubunit complexes succinate dehydrogenase (complex II, CII), ubiquinol-cytochrome c oxidoreductase (cytochrome b-c1 complex, complex III, CIII) and cytochrome c oxidase (complex IV, CIV), that cooperate to transfer electrons derived from NADH and succinate to molecular oxygen, creating an electrochemical gradient over the inner membrane that drives transmembrane transport and the ATP synthase. The cytochrome b-c1 complex catalyzes electron transfer from ubiquinol to cytochrome c, linking this redox reaction to translocation of protons across the mitochondrial inner membrane, with protons being carried across the membrane as hydrogens on the quinol. In the process called Q cycle, 2 protons are consumed from the matrix, 4 protons are released into the intermembrane space and 2 electrons are passed to cytochrome c. The 2 core subunits UQCRC1/QCR1 and UQCRC2/QCR2 are homologous to the 2 mitochondrial-processing peptidase (MPP) subunits beta-MPP and alpha-MPP respectively, and they seem to have preserved their MPP processing properties. May be involved in the in situ processing of UQCRFS1 into the mature Rieske protein and its mitochondrial targeting sequence (MTS)/subunit 9 when incorporated into complex III. The protein is Cytochrome b-c1 complex subunit 2, mitochondrial (Uqcrc2) of Rattus norvegicus (Rat).